The sequence spans 243 residues: Cysteine-rich secretory protein 2 (243 aa).

The first 21 residues, 1–21, serve as a signal peptide directing secretion; the sequence is MALLPVLFLVTVLLPSLPAEG. The SCP domain maps to 41–169; it reads VNKHNELRKA…SLKYYYVCQY (129 aa). 5 disulfide bridges follow: C189–C196, C192–C201, C205–C238, C214–C232, and C223–C236. The ShKT domain maps to 205–238; sequence CQYQDLLSNCDSLKNTAGCEHELLKEKCKATCLC.

This sequence belongs to the CRISP family. As to quaternary structure, interacts with NSUN4 isoform 3. As to expression, testis and epididymis.

It localises to the secreted. In terms of biological role, may regulate some ion channels' activity and thereby regulate calcium fluxes during sperm capacitation. The polypeptide is Cysteine-rich secretory protein 2 (CRISP2) (Homo sapiens (Human)).